Reading from the N-terminus, the 103-residue chain is Small ribosomal subunit protein uS10 (103 aa).

This sequence belongs to the universal ribosomal protein uS10 family. As to quaternary structure, part of the 30S ribosomal subunit.

Its function is as follows. Involved in the binding of tRNA to the ribosomes. This chain is Small ribosomal subunit protein uS10, found in Shewanella loihica (strain ATCC BAA-1088 / PV-4).